A 401-amino-acid chain; its full sequence is Large ribosomal subunit protein uL4 (401 aa).

It belongs to the universal ribosomal protein uL4 family.

This Drosophila melanogaster (Fruit fly) protein is Large ribosomal subunit protein uL4 (RpL4).